We begin with the raw amino-acid sequence, 2028 residues long: Transient receptor potential cation channel subfamily M member 6 (2028 aa).

The Cytoplasmic segment spans residues 1–747 (MQVKKSWIEG…MWMGRLKMRK (747 aa)). The tract at residues 577–601 (QPYKSKEKPEDSQKSKKKSKERQSL) is disordered. The segment covering 580–590 (KSKEKPEDSQK) has biased composition (basic and acidic residues). The chain crosses the membrane as a helical span at residues 748–768 (NSWLKIIISILLPPMILTLEF). Over 769-847 (KSKAEMSHVP…YEFYSAPFVK (79 aa)) the chain is Extracellular. A helical membrane pass occupies residues 848-868 (FWFYTMAYLAFLMLFTYTVLV). At 869–910 (EMQPQPSVHEWLVIIYIFTNAIEKVREICISEPSKFKQKVKM) the chain is on the cytoplasmic side. A helical membrane pass occupies residues 911 to 931 (WLSEYWNLMETVAIGLFAVGF). The Extracellular segment spans residues 932–945 (GLRWGHPPLQTAGR). Residues 946–966 (LIYCIDIIFWFSRLMDFFAVN) traverse the membrane as a helical segment. Residues 967-978 (QHAGPYVTMIAK) are Cytoplasmic-facing. Residues 979–999 (MAANMFYIVIIMAIVLLSFGV) traverse the membrane as a helical segment. At 1000-1018 (ARKAILSPKEPPSWRLARD) the chain is on the extracellular side. An intramembrane region (pore-forming) is located at residues 1019–1039 (IVFEPYWMMYGEVYASDIDVC). At 1040 to 1053 (SNETSCPPGSFLTP) the chain is on the extracellular side. The helical transmembrane segment at 1054–1074 (FLQAVYLFVQYIIMVNLLIAC) threads the bilayer. The Cytoplasmic portion of the chain corresponds to 1075–2028 (FNNIYLDIKS…RSSLEDHTRL (954 aa)). 2 stretches are compositionally biased toward basic and acidic residues: residues 1313–1323 (KREASHVREEQ) and 1665–1677 (DHLR…RDKT). 2 disordered regions span residues 1313 to 1339 (KREA…GISH) and 1658 to 1694 (RHTT…FLTR). Residues 1682–1694 (SGSTSLSRSFLTR) are compositionally biased toward low complexity. Phosphothreonine; by autocatalysis is present on threonine 1730. The region spanning 1756 to 1986 (TLDKSMSSWS…CCGKLRLPDL (231 aa)) is the Alpha-type protein kinase domain. Residues glycine 1783, glycine 1784, leucine 1785, arginine 1786, and lysine 1810 each contribute to the ADP site. Threonine 1857 bears the Phosphothreonine; by autocatalysis mark. Glutamate 1882 and methionine 1885 together coordinate ADP. Histidine 1915 is a binding site for Zn(2+). The active-site Proton acceptor is the aspartate 1929. Aspartate 1939 lines the ADP pocket. Residues histidine 1972, cysteine 1974, and cysteine 1978 each contribute to the Zn(2+) site. The segment at 2009–2028 (TEELPERDKNRSSLEDHTRL) is disordered. A compositionally biased stretch (basic and acidic residues) spans 2012–2028 (LPERDKNRSSLEDHTRL).

In the C-terminal section; belongs to the protein kinase superfamily. Alpha-type protein kinase family. ALPK subfamily. This sequence in the N-terminal section; belongs to the transient receptor (TC 1.A.4) family. LTrpC subfamily. TRPM6 sub-subfamily. Forms heteromers with TRPM7; TRPM6 increases the current amplitude of TRPM6/7 heteromers as compared to TRPM7 homomers. Interacts (via kinase domain) with RACK1. Autophosphorylated; autophosphorylation controls the protein kinase activity of TRPM6 towards their substrates. Autophosphorylation of Thr-1857 in the kinase domain is essential for the inhibitory effect of RACK1. In terms of processing, the C-terminus of TRPM6 is proteolytically cleaved in vivo, in a cell type-specific fashion, releasing the kinase module from the transmembrane domain. The cleaved kinase fragments are translocated to the nucleus to phosphorylate histones and regulate gene expression.

It localises to the cell membrane. The protein resides in the apical cell membrane. Its subcellular location is the nucleus. It catalyses the reaction L-seryl-[protein] + ATP = O-phospho-L-seryl-[protein] + ADP + H(+). It carries out the reaction L-threonyl-[protein] + ATP = O-phospho-L-threonyl-[protein] + ADP + H(+). The enzyme catalyses Mg(2+)(in) = Mg(2+)(out). The catalysed reaction is Ca(2+)(in) = Ca(2+)(out). It catalyses the reaction Zn(2+)(in) = Zn(2+)(out). With respect to regulation, strongly inhibited by intracellular Mg(2+); unlikely to be active at physiological levels of intracellular Mg(2+). In the heteromeric TRPM6-TRPM7 channels complexes, TRPM7 are able to offset the very high sensitivity of TRPM6 to cytosolic Mg(2+) to physiologically relevant concentrations, whereas TRPM6 relieve TRPM7 from the inhibitory action of Mg-ATP. Consequently, the association of TRPM6 with TRPM7 allow for high constitutive activity of TRPM6/7 in the presence of physiological levels of Mg(2+) and Mg-ATP. The kinase activity is controlled through the autophosphorylation of a serine/threonine-rich region located to the N-terminal of the catalytic domain. Bifunctional protein that combines an ion channel with an intrinsic kinase domain, enabling it to modulate cellular functions either by conducting ions through the pore or by phosphorylating downstream proteins via its kinase domain. Crucial for Mg(2+) homeostasis. Has an important role in epithelial magnesium transport and in the active Mg(2+) absorption in the gut and kidney. However, whether TRPM6 forms functional homomeric channels by itself or functions primarily as a subunit of heteromeric TRPM6-TRPM7 channels, is still under debate. In terms of biological role, the C-terminal kinase domain can be cleaved from the channel segment in a cell-type-specific fashion. The cleaved kinase fragments can translocate to the nucleus, and bind chromatin-remodeling complex proteins to ultimately phosphorylate specific Ser/Thr residues of histones known to be functionally important for cell differentiation and development. The polypeptide is Transient receptor potential cation channel subfamily M member 6 (Trpm6) (Mus musculus (Mouse)).